The primary structure comprises 587 residues: Large T antigen (587 aa).

The J domain maps to 6–82 (RLTELLCLPV…PEESGYATFE (77 aa)). Residues 58-78 (EGLRADETLEDSDPEPEESGY) form a disordered region. Residues 65–75 (TLEDSDPEPEE) show a composition bias toward acidic residues. The T-ag OBD DNA-binding region spans 102 to 219 (CMQTYFSVNE…EECSIDMNVV (118 aa)). The segment at 221-319 (EKQFMHAMLY…KRFRSATMTR (99 aa)) adopts a T-ag D1-type zinc-finger fold. Residues Cys258, Cys261, His275, and His279 each contribute to the Zn(2+) site. Residues 360-520 (PDVDVIVDIL…KVYAKALRNN (161 aa)) enclose the SF3 helicase domain. ATP is bound at residue 386–393 (GPVNTGKT).

Forms homohexamers in the presence of ATP. Interacts with host HDAC1. Interacts (via LXCXE domain) with host RB1; the interaction induces the aberrant dissociation of RB1-E2F1 complex thereby disrupting RB1's activity. Interacts (via LXCXE domain) with host pRB-related proteins RBL1 and RBL2. Interacts (via C-terminus) with host TOP1 and POLA1 allowing DNA replication. Interacts with host TP53, inhibiting TP53 binding to DNA. Interacts with host preinitiation complex components TBP, TFIIA and TFIID to regulate transcription initiation. It depends on Mg(2+) as a cofactor. Phosphorylated on both serine and threonine residues. Small t antigen inhibits the dephosphorylation by the AC form of PP2A. In terms of processing, O-Glycosylated near the C-terminal region. Post-translationally, acetylated by CBP in a TP53-dependent manner.

Its subcellular location is the host nucleus. The catalysed reaction is Couples ATP hydrolysis with the unwinding of duplex DNA by translocating in the 3'-5' direction.. It carries out the reaction ATP + H2O = ADP + phosphate + H(+). In terms of biological role, isoform large T antigen is a key early protein essential for both driving viral replication and inducing cellular transformation. Plays a role in viral genome replication by driving entry of quiescent cells into the cell cycle and by autoregulating the synthesis of viral early mRNA. Displays highly oncogenic activities by corrupting the host cellular checkpoint mechanisms that guard cell division and the transcription, replication, and repair of DNA. Participates in the modulation of cellular gene expression preceeding viral DNA replication. This step involves binding to host key cell cycle regulators retinoblastoma protein RB1/pRb and TP53. Induces the disassembly of host E2F1 transcription factors from RB1, thus promoting transcriptional activation of E2F1-regulated S-phase genes. Inhibits host TP53 binding to DNA, abrogating the ability of TP53 to stimulate gene expression. Plays the role of a TFIID-associated factor (TAF) in transcription initiation for all three RNA polymerases, by stabilizing the TBP-TFIIA complex on promoters. Initiates viral DNA replication and unwinding via interactions with the viral origin of replication. Binds two adjacent sites in the SV40 origin. The replication fork movement is facilitated by Large T antigen helicase activity. Has processive 3'-5' DNA helicase activity which requires a short 3' single-stranded region and ATP. Activates the transcription of viral late mRNA, through host TBP and TFIIA stabilization. Interferes with histone deacetylation mediated by HDAC1, leading to activation of transcription. The chain is Large T antigen from Budgerigar fledgling disease virus (BFPyV).